The chain runs to 228 residues: Cytidylate kinase (228 aa).

7-15 (GPVATGKST) provides a ligand contact to ATP.

This sequence belongs to the cytidylate kinase family. Type 1 subfamily.

The protein localises to the cytoplasm. It carries out the reaction CMP + ATP = CDP + ADP. It catalyses the reaction dCMP + ATP = dCDP + ADP. The sequence is that of Cytidylate kinase from Protochlamydia amoebophila (strain UWE25).